A 329-amino-acid polypeptide reads, in one-letter code: Glucosyl-3-phosphoglycerate synthase (329 aa).

UDP-alpha-D-glucose-binding positions include 55–59 (PALDE), S86, K119, and 139–141 (DSD). D141 contacts Mn(2+). 189–192 (GRVT) contacts (2R)-3-phosphoglycerate. UDP-alpha-D-glucose is bound at residue 234-237 (YGVE). H263 serves as a coordination point for Mn(2+). N265 provides a ligand contact to (2R)-3-phosphoglycerate.

Belongs to the glycosyltransferase 2 family. In terms of assembly, homodimer. Mg(2+) serves as cofactor. Requires Mn(2+) as cofactor.

It catalyses the reaction an NDP-alpha-D-glucose + (2R)-3-phosphoglycerate = (2R)-2-O-(alpha-D-glucopyranosyl)-3-phospho-glycerate + a ribonucleoside 5'-diphosphate + H(+). The catalysed reaction is (2R)-3-phosphoglycerate + UDP-alpha-D-glucose = (2R)-2-O-(alpha-D-glucopyranosyl)-3-phospho-glycerate + UDP + H(+). It carries out the reaction GDP-D-glucose + (2R)-3-phosphoglycerate = (2R)-2-O-(alpha-D-glucopyranosyl)-3-phospho-glycerate + GDP + H(+). In terms of biological role, involved in the biosynthesis of 6-O-methylglucose lipopolysaccarides (MGLPs). Catalyzes the transfer of the glucose moiety from UDP-alpha-D-glucose (UDP-Glc) to the position 2 of 3-phospho-D-glycerate (3-PGA) to form glucosyl-3-phosphoglycerate (GPG). To a lesser extent can also use GDP-Glc but not UDP-Gal or UDP-GlcNAc as the sugar donor. The protein is Glucosyl-3-phosphoglycerate synthase of Mycolicibacterium paratuberculosis (strain ATCC BAA-968 / K-10) (Mycobacterium paratuberculosis).